The chain runs to 751 residues: Lanosterol synthase erg7A (751 aa).

The interval 1 to 22 is disordered; sequence MTGGPIASWRTAAQGHLTPDEN. The PFTB 1 repeat unit spans residues 147–189; the sequence is ATEIKRYLFARQHPEDGGWGLHIEAHSSVFGTCMNYVALRLIG. Residue Asp481 is the Proton donor of the active site. 3 PFTB repeats span residues 508 to 553, 585 to 625, and 634 to 675; these read LKDS…MIGY, KDKA…ASVG, and ARRG…VQTA.

The protein belongs to the terpene cyclase/mutase family.

Its subcellular location is the lipid droplet. The protein localises to the endoplasmic reticulum membrane. It catalyses the reaction (S)-2,3-epoxysqualene = lanosterol. The protein operates within steroid metabolism; ergosterol biosynthesis. Lanosterol synthase; part of the third module of ergosterol biosynthesis pathway that includes the late steps of the pathway. ERG7A and ERG7B catalyze the cyclization of (S)-2,3 oxidosqualene to lanosterol, a reaction that forms the sterol core. The third module or late pathway involves the ergosterol synthesis itself through consecutive reactions that mainly occur in the endoplasmic reticulum (ER) membrane. Firstly, the squalene synthase erg9 catalyzes the condensation of 2 farnesyl pyrophosphate moieties to form squalene, which is the precursor of all steroids. Squalene synthase is crucial for balancing the incorporation of farnesyl diphosphate (FPP) into sterol and nonsterol isoprene synthesis. Secondly, squalene is converted into lanosterol by the consecutive action of the squalene epoxidase erg1 and the lanosterol synthase erg7. Then, the delta(24)-sterol C-methyltransferase erg6 methylates lanosterol at C-24 to produce eburicol. Eburicol is the substrate of the sterol 14-alpha demethylase encoded by cyp51A and cyp51B, to yield 4,4,24-trimethyl ergosta-8,14,24(28)-trienol. The C-14 reductase erg24 then reduces the C14=C15 double bond which leads to 4,4-dimethylfecosterol. A sequence of further demethylations at C-4, involving the C-4 demethylation complex containing the C-4 methylsterol oxidases erg25A or erg25B, the sterol-4-alpha-carboxylate 3-dehydrogenase erg26 and the 3-keto-steroid reductase erg27, leads to the production of fecosterol via 4-methylfecosterol. The C-8 sterol isomerase erg2 then catalyzes the reaction which results in unsaturation at C-7 in the B ring of sterols and thus converts fecosterol to episterol. The sterol-C5-desaturase erg3B then catalyzes the introduction of a C-5 double bond in the B ring to produce 5-dehydroepisterol. The 2 other sterol-C5-desaturases, erg3A and erg3C, seem to be less important in ergosterol biosynthesis. The C-22 sterol desaturase erg5 further converts 5-dehydroepisterol into ergosta-5,7,22,24(28)-tetraen-3beta-ol by forming the C-22(23) double bond in the sterol side chain. Finally, ergosta-5,7,22,24(28)-tetraen-3beta-ol is substrate of the C-24(28) sterol reductases erg4A and erg4B to produce ergosterol. Possible alternative sterol biosynthetic pathways might exist from fecosterol to ergosterol, depending on the activities of the erg3 isoforms. This Aspergillus fumigatus (strain ATCC MYA-4609 / CBS 101355 / FGSC A1100 / Af293) (Neosartorya fumigata) protein is Lanosterol synthase erg7A.